The sequence spans 194 residues: Thymidylate kinase (194 aa).

7–14 (GVDCVGKS) contributes to the ATP binding site.

This sequence belongs to the thymidylate kinase family.

The enzyme catalyses dTMP + ATP = dTDP + ADP. In terms of biological role, phosphorylation of dTMP to form dTDP in both de novo and salvage pathways of dTTP synthesis. This Campylobacter lari (strain RM2100 / D67 / ATCC BAA-1060) protein is Thymidylate kinase.